The following is a 487-amino-acid chain: Zinc finger and BTB domain-containing protein 32 (487 aa).

In terms of domain architecture, BTB spans 29 to 87 (CDTLITVGGQEFPAHSLVLAGVSQQLGRRGQWALGEGISPSTFAQLLNFVYGESVELQP). The span at 113–166 (RGDRAKKPDPGLKKHQEEPEKPSRNAERELGDPGEKQKPEQVSRTGGREQEMLH) shows a compositional bias: basic and acidic residues. Disordered stretches follow at residues 113–208 (RGDR…ADGK) and 308–371 (QNQL…ARSR). Polar residues predominate over residues 308–320 (QNQLASSSPTPGS). Positions 357 to 369 (PPRPHPPPAPPAR) are enriched in pro residues. C2H2-type zinc fingers lie at residues 373 to 395 (YACS…YRVH), 401 to 423 (FSCS…LRTH), and 428 to 450 (YRXX…MRGH). The tract at residues 468 to 487 (SSSRPSRPSTSPCCPSSSTT) is disordered.

The protein belongs to the krueppel C2H2-type zinc-finger protein family. In terms of assembly, homodimer (via PTB domain). Interacts with the N-terminal of FANCC. Interacts with ZBTB16. Interacts with GATA3.

The protein localises to the nucleus. DNA-binding protein that binds to the to a 5'-TGTACAGTGT-3' core sequence. May function as a transcriptional transactivator and transcriptional repressor. Probably exerts its repressor effect by preventing GATA3 from binding to DNA. May play a role in regulating the differentiation and activation of helper T-cells. The protein is Zinc finger and BTB domain-containing protein 32 (ZBTB32) of Pan troglodytes (Chimpanzee).